Here is a 407-residue protein sequence, read N- to C-terminus: Na(+)-translocating NADH-quinone reductase subunit F (407 aa).

The chain crosses the membrane as a helical span at residues 6 to 26; that stretch reads IFLAIGMFTAIVLGLVAIILV. The 2Fe-2S ferredoxin-type domain maps to 35 to 127; sequence GDVTIQINGE…DMQIRVPEEV (93 aa). Residues C70, C76, C79, and C111 each coordinate [2Fe-2S] cluster. The 140-residue stretch at 130–269 folds into the FAD-binding FR-type domain; the sequence is VKKWECTVES…YGPFGEFFAK (140 aa).

Belongs to the NqrF family. In terms of assembly, composed of six subunits; NqrA, NqrB, NqrC, NqrD, NqrE and NqrF. [2Fe-2S] cluster is required as a cofactor. The cofactor is FAD.

The protein localises to the cell inner membrane. It catalyses the reaction a ubiquinone + n Na(+)(in) + NADH + H(+) = a ubiquinol + n Na(+)(out) + NAD(+). In terms of biological role, NQR complex catalyzes the reduction of ubiquinone-1 to ubiquinol by two successive reactions, coupled with the transport of Na(+) ions from the cytoplasm to the periplasm. The first step is catalyzed by NqrF, which accepts electrons from NADH and reduces ubiquinone-1 to ubisemiquinone by a one-electron transfer pathway. This is Na(+)-translocating NADH-quinone reductase subunit F from Pseudomonas aeruginosa (strain UCBPP-PA14).